The sequence spans 292 residues: RWD domain-containing protein 2A (292 aa).

The RWD domain maps to 14 to 134; the sequence is LEMEMLFSMF…QWLQDNSASY (121 aa).

The sequence is that of RWD domain-containing protein 2A (RWDD2A) from Macaca fascicularis (Crab-eating macaque).